We begin with the raw amino-acid sequence, 371 residues long: N-acetyldiaminopimelate deacetylase (371 aa).

Residue aspartate 68 is part of the active site. Catalysis depends on glutamate 127, which acts as the Proton acceptor.

Belongs to the peptidase M20A family. N-acetyldiaminopimelate deacetylase subfamily.

It carries out the reaction N-acetyl-(2S,6S)-2,6-diaminopimelate + H2O = (2S,6S)-2,6-diaminopimelate + acetate. Its pathway is amino-acid biosynthesis; L-lysine biosynthesis via DAP pathway; LL-2,6-diaminopimelate from (S)-tetrahydrodipicolinate (acetylase route): step 3/3. In terms of biological role, catalyzes the conversion of N-acetyl-diaminopimelate to diaminopimelate and acetate. The chain is N-acetyldiaminopimelate deacetylase from Listeria welshimeri serovar 6b (strain ATCC 35897 / DSM 20650 / CCUG 15529 / CIP 8149 / NCTC 11857 / SLCC 5334 / V8).